Consider the following 111-residue polypeptide: BET1-like protein (111 aa).

The Cytoplasmic segment spans residues methionine 1–lysine 86. 2 positions are modified to phosphoserine: serine 9 and serine 37. In terms of domain architecture, t-SNARE coiled-coil homology spans glutamate 15–methionine 77. A helical; Anchor for type IV membrane protein membrane pass occupies residues leucine 87–serine 107. The Lumenal segment spans residues arginine 108 to threonine 111.

In terms of assembly, component of a SNARE complex consisting of STX5, YKT6, GOSR1 and BET1L. Interacts with STX5.

The protein resides in the golgi apparatus membrane. It localises to the golgi apparatus. It is found in the trans-Golgi network membrane. Its function is as follows. Vesicle SNARE required for targeting and fusion of retrograde transport vesicles with the Golgi complex. Required for the integrity of the Golgi complex. In Bos taurus (Bovine), this protein is BET1-like protein.